The following is a 624-amino-acid chain: Leucine-rich repeat, immunoglobulin-like domain and transmembrane domain-containing protein 1 (624 aa).

The first 21 residues, 1–21 (MWVALGMLWLLALGGPHQAWG), serve as a signal peptide directing secretion. One can recognise an LRRNT domain in the interval 22 to 59 (FCPSECSCSLRILSDGSKARTVVCSDPDLTLPPASIPP). The Lumenal portion of the chain corresponds to 22–527 (FCPSECSCSL…EVVDAEGTQR (506 aa)). LRR repeat units follow at residues 60–81 (DTCK…TFRP), 84–105 (RLEQ…MLRG), 108–129 (RLRE…ALRD), 132–153 (QLQL…AAHF), and 156–177 (NLTF…LLDV). N156 carries an N-linked (GlcNAc...) asparagine glycan. The LRRCT domain maps to 201 to 254 (NPWVCDCRLYDLVHLLDGWVSSNLIFIEARLRCASPRSLAGVAFSQLELRKCQS). Residues 267–336 (PLGSTVLLRC…YICQAKNFLG (70 aa)) form the Ig-like C2-type domain. A disulfide bridge connects residues C276 and C329. 2 N-linked (GlcNAc...) asparagine glycosylation sites follow: N297 and N456. The region spanning 431-519 (MVRSLKVVGD…QCVIFSTDEV (89 aa)) is the Fibronectin type-III domain. Residues 526–549 (QRLINMVVISVAAIIALPPTLLVC) form an LRR 6 repeat. Residues 528–548 (LINMVVISVAAIIALPPTLLV) traverse the membrane as a helical segment. The Cytoplasmic portion of the chain corresponds to 549 to 624 (CCGALRRRCH…GGRRINEYFC (76 aa)).

In terms of assembly, may form a homodimer. Interacts with LRIT2; may form a heterodimer with LRIT2. Interacts (via its N-terminal extracellular domain) with metabotropic glutamate receptor GRM6. Interacts (via its extreme C-terminus) with the scaffold protein FRMPD2 (via the third PDZ domain); the interaction leads to their colocalization in photoreceptor synapses. As to expression, expressed predominantly in developing photoreceptor and bipolar cells.

It localises to the endoplasmic reticulum membrane. The protein localises to the cell projection. Its subcellular location is the dendrite. In terms of biological role, photoreceptor synaptic protein essential for normal vision. Involved in synapse formation in cone photoreceptor cells. This chain is Leucine-rich repeat, immunoglobulin-like domain and transmembrane domain-containing protein 1 (Lrit1), found in Mus musculus (Mouse).